The sequence spans 299 residues: Endonuclease G, mitochondrial (299 aa).

The transit peptide at 1–48 directs the protein to the mitochondrion; it reads MQLLRAGLTLALGAGLGAAAESWWRQRADARATPGLLSRLPVLPVAAA. T130 is subject to Phosphothreonine. The active-site Proton acceptor is the H143. N174 is a Mg(2+) binding site. The tract at residues 288–298 is essential for deoxyribonuclease activity; that stretch reads AGSLKAITAGS. At S290 the chain carries Phosphoserine.

This sequence belongs to the DNA/RNA non-specific endonuclease family. In terms of assembly, homodimer; disulfide-linked. Homodimerization is essential for its activity. Interacts with YWHAG. Mg(2+) serves as cofactor. In terms of processing, GSK3-beta-mediated dual phosphorylations at Thr-130 and Ser-290 is necessary for its interaction with YWHAG and the induction of autophagy.

The protein localises to the mitochondrion. Its function is as follows. Endonuclease that preferentially catalyzes the cleavage of double-stranded 5-hydroxymethylcytosine (5hmC)-modified DNA. The 5hmC-modified nucleotide does not increase the binding affinity, but instead increases the efficiency of cutting and specifies the site of cleavage for the modified DNAs. Shows significantly higher affinity for four- stranded Holliday junction over duplex and single-stranded DNAs. Promotes conservative recombination when the DNA is 5hmC-modified. Promotes autophagy through the suppression of mTOR by its phosphorylation-mediated interaction with YWHAG and its endonuclease activity-mediated DNA damage response. GSK3-beta mediated phosphorylation of ENDOG enhances its interaction with YWHAG, leading to the release of TSC2 and PIK3C3 from YWHAG resulting in mTOR pathway suppression and autophagy initiation. Promotes cleavage of mtDNA in response to oxidative and nitrosative stress, in turn inducing compensatory mtDNA replication. The chain is Endonuclease G, mitochondrial (ENDOG) from Bos taurus (Bovine).